Here is a 191-residue protein sequence, read N- to C-terminus: MGKKLVMAQKRGETRALCLGVAMVMCAVIAYYILGTTMLPLYQKSVWTQKSTCHLIETNIREQEELEGKKVPQYPCLWVNVSAVGRWAVLYHTEDTRDQNHQCSYIPGSLENYQVARADVEKVKAKFHEQQIFYCFSTTRENETTVLYRRLYGPQTLLFSLFWPTFLLTGGLLIIAMVKINQSLSILAAQR.

At 1 to 15 the chain is on the cytoplasmic side; it reads MGKKLVMAQKRGETR. Residues 16-36 form a helical membrane-spanning segment; the sequence is ALCLGVAMVMCAVIAYYILGT. The Extracellular segment spans residues 37 to 157; the sequence is TMLPLYQKSV…YRRLYGPQTL (121 aa). 2 N-linked (GlcNAc...) asparagine glycosylation sites follow: Asn-80 and Asn-142. A helical membrane pass occupies residues 158-178; the sequence is LFSLFWPTFLLTGGLLIIAMV. Residues 179–191 lie on the Cytoplasmic side of the membrane; that stretch reads KINQSLSILAAQR.

It belongs to the KCNMB (TC 8.A.14.1) family. KCNMB1 subfamily. Interacts with KCNMA1 tetramer. There are probably 4 molecules of KCMNB1 per KCNMA1 tetramer. Post-translationally, N-glycosylated.

The protein localises to the membrane. In terms of biological role, regulatory subunit of the calcium activated potassium KCNMA1 (maxiK) channel. Modulates the calcium sensitivity and gating kinetics of KCNMA1, thereby contributing to KCNMA1 channel diversity. Increases the apparent Ca(2+)/voltage sensitivity of the KCNMA1 channel. It also modifies KCNMA1 channel kinetics and alters its pharmacological properties. It slows down the activation and the deactivation kinetics of the channel. Acts as a negative regulator of smooth muscle contraction by enhancing the calcium sensitivity to KCNMA1. Its presence is also a requirement for internal binding of the KCNMA1 channel opener dehydrosoyasaponin I (DHS-1) triterpene glycoside and for external binding of the agonist hormone 17-beta-estradiol (E2). Increases the binding activity of charybdotoxin (CTX) toxin to KCNMA1 peptide blocker by increasing the CTX association rate and decreasing the dissociation rate. The sequence is that of Calcium-activated potassium channel subunit beta-1 (KCNMB1) from Canis lupus familiaris (Dog).